The primary structure comprises 148 residues: Probable calcium-binding protein CML7 (148 aa).

3 EF-hand domains span residues 9–44 (EQVA…LGGN), 80–115 (PFDR…IGEK), and 116–148 (LEPH…IVAK). The Ca(2+) site is built by Asp-22, Asp-24, Asp-26, Arg-28, Glu-33, Asp-93, Asp-95, Ser-97, Thr-99, and Asp-104.

Its function is as follows. Potential calcium sensor. The polypeptide is Probable calcium-binding protein CML7 (CML7) (Oryza sativa subsp. japonica (Rice)).